We begin with the raw amino-acid sequence, 211 residues long: MGQKVNPIGFRLGVIRTWDSRWYAEADYAKLLHEDIKLRNFLKKRLFNSGVSKIEIERAASKAKINIFTARPGLIIGKKGAEVETLKKELAKLTDKEIYLNIQEVRKPELDAQLVSENVALQLERRVAFRRAMKKSVTSALKFGAKGIRITCSGRLGGAEMSRTEWYREGRVPLHTLRADIDYGFAEAKTTYGIIGVKVLIFKGEVLPGQK.

A KH type-2 domain is found at 38-106 (LRNFLKKRLF…EIYLNIQEVR (69 aa)).

Belongs to the universal ribosomal protein uS3 family. Part of the 30S ribosomal subunit. Forms a tight complex with proteins S10 and S14.

In terms of biological role, binds the lower part of the 30S subunit head. Binds mRNA in the 70S ribosome, positioning it for translation. This Geobacter metallireducens (strain ATCC 53774 / DSM 7210 / GS-15) protein is Small ribosomal subunit protein uS3.